Here is a 752-residue protein sequence, read N- to C-terminus: Photosystem I P700 chlorophyll a apoprotein A1 (752 aa).

Helical transmembrane passes span Ile73 to Ala96, Leu159 to His182, Leu198 to Ala222, Ile294 to Tyr312, Trp349 to Tyr372, Leu388 to Val414, Ala436 to His458, and Phe533 to Leu551. Positions 575 and 584 each coordinate [4Fe-4S] cluster. The next 2 membrane-spanning stretches (helical) occupy residues His591–Trp612 and Leu666–Phe688. His677 contacts chlorophyll a'. Positions 685 and 693 each coordinate chlorophyll a. A phylloquinone-binding site is contributed by Trp694. Residues Ala726 to Ala746 traverse the membrane as a helical segment.

This sequence belongs to the PsaA/PsaB family. In terms of assembly, the PsaA/B heterodimer binds the P700 chlorophyll special pair and subsequent electron acceptors. PSI consists of a core antenna complex that captures photons, and an electron transfer chain that converts photonic excitation into a charge separation. The cyanobacterial PSI reaction center is composed of one copy each of PsaA,B,C,D,E,F,I,J,K,L,M and X, and forms trimeric complexes. PSI electron transfer chain: 5 chlorophyll a, 1 chlorophyll a', 2 phylloquinones and 3 4Fe-4S clusters. PSI core antenna: 90 chlorophyll a, 22 carotenoids, 3 phospholipids and 1 galactolipid. P700 is a chlorophyll a/chlorophyll a' dimer, A0 is one or more chlorophyll a, A1 is one or both phylloquinones and FX is a shared 4Fe-4S iron-sulfur center. serves as cofactor.

The protein localises to the cellular thylakoid membrane. It catalyses the reaction reduced [plastocyanin] + hnu + oxidized [2Fe-2S]-[ferredoxin] = oxidized [plastocyanin] + reduced [2Fe-2S]-[ferredoxin]. Functionally, psaA and PsaB bind P700, the primary electron donor of photosystem I (PSI), as well as the electron acceptors A0, A1 and FX. PSI is a plastocyanin/cytochrome c6-ferredoxin oxidoreductase, converting photonic excitation into a charge separation, which transfers an electron from the donor P700 chlorophyll pair to the spectroscopically characterized acceptors A0, A1, FX, FA and FB in turn. Oxidized P700 is reduced on the lumenal side of the thylakoid membrane by plastocyanin or cytochrome c6. This Nostoc sp. (strain PCC 7120 / SAG 25.82 / UTEX 2576) protein is Photosystem I P700 chlorophyll a apoprotein A1.